Consider the following 156-residue polypeptide: MNINATLIGQSVAFLIFVLFCMKYVWPPVITALQERQKKIADGLDAANRAARDLELAQEKAGQQLREAKAQAAEIIEQSKKRAAQLVEEARDQARVEADRVKAQALAEIEQELNSAKDALRAQVGALAVGGAEKILGATIDQNAHAELVNKLAAEI.

A helical transmembrane segment spans residues 12–32 (VAFLIFVLFCMKYVWPPVITA).

This sequence belongs to the ATPase B chain family. F-type ATPases have 2 components, F(1) - the catalytic core - and F(0) - the membrane proton channel. F(1) has five subunits: alpha(3), beta(3), gamma(1), delta(1), epsilon(1). F(0) has three main subunits: a(1), b(2) and c(10-14). The alpha and beta chains form an alternating ring which encloses part of the gamma chain. F(1) is attached to F(0) by a central stalk formed by the gamma and epsilon chains, while a peripheral stalk is formed by the delta and b chains.

The protein resides in the cell inner membrane. F(1)F(0) ATP synthase produces ATP from ADP in the presence of a proton or sodium gradient. F-type ATPases consist of two structural domains, F(1) containing the extramembraneous catalytic core and F(0) containing the membrane proton channel, linked together by a central stalk and a peripheral stalk. During catalysis, ATP synthesis in the catalytic domain of F(1) is coupled via a rotary mechanism of the central stalk subunits to proton translocation. Its function is as follows. Component of the F(0) channel, it forms part of the peripheral stalk, linking F(1) to F(0). The chain is ATP synthase subunit b from Pseudomonas putida (strain GB-1).